The primary structure comprises 663 residues: Pescadillo homolog (663 aa).

Over residues 311-321 the composition is skewed to basic and acidic residues; that stretch reads QLKEDESKSDE. Disordered regions lie at residues 311-360, 428-447, and 504-663; these read QLKE…YSSS, TNED…GPNQ, and AQQT…AQKA. Over residues 322-334 the composition is skewed to acidic residues; the sequence is TAEEDAEADDEEK. Residues 361 to 477 enclose the BRCT domain; it reads DPSQLFANFT…ELKSPELYAP (117 aa). Positions 501-663 form a coiled coil; it reads PLEAQQTEAE…KLEKEKAQKA (163 aa). The segment covering 526–567 has biased composition (acidic residues); the sequence is DGSDVENDMDVDEAEDDEEEEEGDEEDAEEAEEEDAEEDEEE. Positions 591-620 are enriched in basic and acidic residues; it reads VDSKTKAKLEQRKALEKKAREEAEDLERAK.

It belongs to the pescadillo family. As to quaternary structure, component of the NOP7 complex, composed of erb1, nop7 and ytm1. The complex is held together by erb1, which interacts with nop7 via its N-terminal domain and with ytm1 via a high-affinity interaction between the seven-bladed beta-propeller domains of the 2 proteins. The NOP7 complex associates with the 66S pre-ribosome.

Its subcellular location is the nucleus. The protein localises to the nucleolus. It is found in the nucleoplasm. Its function is as follows. Component of the NOP7 complex, which is required for maturation of the 25S and 5.8S ribosomal RNAs and formation of the 60S ribosome. This is Pescadillo homolog (nop7) from Neurospora crassa (strain ATCC 24698 / 74-OR23-1A / CBS 708.71 / DSM 1257 / FGSC 987).